The sequence spans 320 residues: Lipoyl synthase (320 aa).

Over residues 1 to 24 the composition is skewed to basic and acidic residues; the sequence is MIGKLVRDLKIPDQRHPEKAHRPD. Residues 1–30 are disordered; that stretch reads MIGKLVRDLKIPDQRHPEKAHRPDNVQPKK. Cys60, Cys65, Cys71, Cys86, Cys90, Cys93, and Ser300 together coordinate [4Fe-4S] cluster. The 218-residue stretch at 72-289 folds into the Radical SAM core domain; that stretch reads WSQGHATMMI…EKAAYGKGFL (218 aa).

Belongs to the radical SAM superfamily. Lipoyl synthase family. It depends on [4Fe-4S] cluster as a cofactor.

The protein localises to the cytoplasm. The catalysed reaction is [[Fe-S] cluster scaffold protein carrying a second [4Fe-4S](2+) cluster] + N(6)-octanoyl-L-lysyl-[protein] + 2 oxidized [2Fe-2S]-[ferredoxin] + 2 S-adenosyl-L-methionine + 4 H(+) = [[Fe-S] cluster scaffold protein] + N(6)-[(R)-dihydrolipoyl]-L-lysyl-[protein] + 4 Fe(3+) + 2 hydrogen sulfide + 2 5'-deoxyadenosine + 2 L-methionine + 2 reduced [2Fe-2S]-[ferredoxin]. The protein operates within protein modification; protein lipoylation via endogenous pathway; protein N(6)-(lipoyl)lysine from octanoyl-[acyl-carrier-protein]: step 2/2. In terms of biological role, catalyzes the radical-mediated insertion of two sulfur atoms into the C-6 and C-8 positions of the octanoyl moiety bound to the lipoyl domains of lipoate-dependent enzymes, thereby converting the octanoylated domains into lipoylated derivatives. This Cereibacter sphaeroides (strain ATCC 17029 / ATH 2.4.9) (Rhodobacter sphaeroides) protein is Lipoyl synthase.